Here is a 138-residue protein sequence, read N- to C-terminus: Peptide methionine sulfoxide reductase MsrB (138 aa).

The region spanning E15 to R137 is the MsrB domain. 4 residues coordinate Zn(2+): C54, C57, C103, and C106. C126 acts as the Nucleophile in catalysis.

This sequence belongs to the MsrB Met sulfoxide reductase family. Requires Zn(2+) as cofactor.

The enzyme catalyses L-methionyl-[protein] + [thioredoxin]-disulfide + H2O = L-methionyl-(R)-S-oxide-[protein] + [thioredoxin]-dithiol. The sequence is that of Peptide methionine sulfoxide reductase MsrB from Methylibium petroleiphilum (strain ATCC BAA-1232 / LMG 22953 / PM1).